We begin with the raw amino-acid sequence, 809 residues long: F-BAR domain only protein 2 (809 aa).

The region spanning 3–250 is the F-BAR domain; the sequence is MAHFVENFWG…NMANTTIESL (248 aa). Positions 3–274 are mediates dimerization and binding to membranes enriched in Pi(4,5)-P2 and induces their tubulation; it reads MAHFVENFWG…PGLIEFEECD (272 aa). Residues 87–156 adopt a coiled-coil conformation; the sequence is HLDLVRKLQE…CVEQERLKKE (70 aa). Lys297 is covalently cross-linked (Glycyl lysine isopeptide (Lys-Gly) (interchain with G-Cter in SUMO2)). The disordered stretch occupies residues 301-352; it reads DAESVECPDADSLNIPDVDEEGFSIKPEANQNDTKENHFYSSSDSDSEDEEP. Ser312 carries the phosphoserine modification. Thr385 carries the post-translational modification Phosphothreonine. Residues Ser387, Ser394, Ser402, and Ser403 each carry the phosphoserine modification. Over residues 390 to 416 the composition is skewed to polar residues; that stretch reads VSRHSPVQMNRNSSNEELTKSKPSSLP. 2 disordered regions span residues 390 to 422 and 435 to 536; these read VSRH…KGTN and LESS…PVSL. A compositionally biased stretch (low complexity) spans 435–456; the sequence is LESSSAPLTSSSSARPTTPLSL. Ser487, Ser492, Ser495, Ser507, Ser509, Ser510, and Ser532 each carry phosphoserine. A compositionally biased stretch (low complexity) spans 501-520; the sequence is PLARAESSSSISSSASLSAA. A mediates interaction with DAB2, EPS15, EPS15R and ITSN1 region spans residues 520 to 809; it reads ANTPTVGVSR…FATGRYLADC (290 aa). Positions 541–808 constitute an MHD domain; the sequence is TLPVAIALTE…RFATGRYLAD (268 aa).

It belongs to the FCHO family. As to quaternary structure, homodimer; disulfide-linked. May form homotetramer. Interacts with AP2A1. Interacts with EPS15, EPS15R, ITSN1 and ITSN2; recruit those scaffolding proteins which in turn may interact with the adaptor protein complex AP-2 at the plasma membrane. Interacts with DAB2 (via DPF motifs); mediates LDL receptor/LDLR endocytosis. In terms of processing, ubiquitinated. Mainly undergoes monoubiquitination but also polyubiquitination. Ubiquitously expressed (at protein level).

It localises to the membrane. Its subcellular location is the clathrin-coated pit. Functions in an early step of clathrin-mediated endocytosis. Has both a membrane binding/bending activity and the ability to recruit proteins essential to the formation of functional clathrin-coated pits. Has a lipid-binding activity with a preference for membranes enriched in phosphatidylserine and phosphoinositides (Pi(4,5) biphosphate) like the plasma membrane. Its membrane-bending activity might be important for the subsequent action of clathrin and adaptors in the formation of clathrin-coated vesicles. Involved in adaptor protein complex AP-2-dependent endocytosis of the transferrin receptor, it also functions in the AP-2-independent endocytosis of the LDL receptor. This chain is F-BAR domain only protein 2 (Fcho2), found in Mus musculus (Mouse).